Reading from the N-terminus, the 251-residue chain is Derlin-1 (251 aa).

Residue Ser-2 is modified to N-acetylserine. Residues 2–15 lie on the Cytoplasmic side of the membrane; sequence SDIGDWFRSIPAIT. Residues 16 to 31 form a helical membrane-spanning segment; sequence RYWFAATVAVPLVGKL. At 32–69 the chain is on the lumenal side; sequence GLISPAYLFLWPEAFLYRFQIWRPITATFYFPVGPGTG. A helical transmembrane segment spans residues 70–89; sequence FLYLVNLYFLYQYSTRLETG. Residues 90-94 lie on the Cytoplasmic side of the membrane; it reads AFDGR. The chain crosses the membrane as a helical span at residues 95-115; the sequence is PADYLFMLLFNWICIVITGLA. The Lumenal segment spans residues 116–122; sequence MDMQLLM. Residues 123 to 137 traverse the membrane as a helical segment; sequence IPLIMSVLYVWAQLN. At 138–154 the chain is on the cytoplasmic side; that stretch reads RDMIVSFWFGTRFKACY. Residues 155 to 166 traverse the membrane as a helical segment; it reads LPWVILGFNYII. Topologically, residues 167 to 170 are lumenal; that stretch reads GGSV. A helical membrane pass occupies residues 171-189; that stretch reads INELIGNLVGHLYFFLMFR. The Cytoplasmic portion of the chain corresponds to 190-251; it reads YPMDLGGRNF…WGQGFRLGDQ (62 aa). Ser-201 is subject to Phosphoserine. Phosphothreonine is present on Thr-202. Residue Ser-226 is modified to Phosphoserine. The disordered stretch occupies residues 229 to 251; the sequence is RAADQNGGGGRHNWGQGFRLGDQ. An SHP-box motif is present at residues 241 to 248; it reads NWGQGFRL.

The protein belongs to the derlin family. Homotetramer. The four subunits of the tetramer are arranged in a twofold symmetry. Forms heterooligomers with DERL2 and DERL3; binding to DERL3 is poorer than that between DERL2 and DERL3. Interacts (via SHP-box motif) with VCP. Interacts with AMFR, SELENOS, SEL1L, SELENOK and SYVN1, as well as with SEL1L-SYVN1 and VCP-SELENOS protein complexes; this interaction is weaker than that observed between DERL2 and these complexes. Interacts with NGLY1 and YOD1. Does not bind to EDEM1. Interacts with DNAJB9. Interacts with RNF103. Interacts with HM13. Interacts with XBP1 isoform 1 (via luminal/ectodomain domain); the interaction obviates the need for ectodomain shedding prior HM13/SPP-mediated XBP1 isoform 1 cleavage. Interacts with the signal recognition particle/SRP and the SRP receptor; in the process of endoplasmic reticulum stress-induced pre-emptive quality control. May interact with UBXN6. Interacts with ZFAND2B; probably through VCP. Interacts with CCDC47. Interacts with C18orf32. May interact with TRAM1. Forms a complex with SVIP and VCP/p97. As to quaternary structure, (Microbial infection) Interacts with the cytomegalovirus US11 protein. In terms of tissue distribution, ubiquitous.

The protein resides in the endoplasmic reticulum membrane. Its function is as follows. Functional component of endoplasmic reticulum-associated degradation (ERAD) for misfolded lumenal proteins. Forms homotetramers which encircle a large channel traversing the endoplasmic reticulum (ER) membrane. This allows the retrotranslocation of misfolded proteins from the ER into the cytosol where they are ubiquitinated and degraded by the proteasome. The channel has a lateral gate within the membrane which provides direct access to membrane proteins with no need to reenter the ER lumen first. May mediate the interaction between VCP and the misfolded protein. Also involved in endoplasmic reticulum stress-induced pre-emptive quality control, a mechanism that selectively attenuates the translocation of newly synthesized proteins into the endoplasmic reticulum and reroutes them to the cytosol for proteasomal degradation. By controlling the steady-state expression of the IGF1R receptor, indirectly regulates the insulin-like growth factor receptor signaling pathway. In terms of biological role, (Microbial infection) In case of infection by cytomegaloviruses, it plays a central role in the export from the ER and subsequent degradation of MHC class I heavy chains via its interaction with US11 viral protein, which recognizes and associates with MHC class I heavy chains. Also participates in the degradation process of misfolded cytomegalovirus US2 protein. The protein is Derlin-1 of Homo sapiens (Human).